Consider the following 276-residue polypeptide: Mitochondrial outer membrane protein porin of 36 kDa (276 aa).

The protein belongs to the eukaryotic mitochondrial porin (TC 1.B.8.1) family.

The protein resides in the mitochondrion outer membrane. Functionally, forms a channel through the cell membrane that allows diffusion of small hydrophilic molecules. The channel adopts an open conformation at low or zero membrane potential and a closed conformation at potentials above 30-40 mV. The open state has a weak anion selectivity whereas the closed state is cation-selective. The polypeptide is Mitochondrial outer membrane protein porin of 36 kDa (Solanum tuberosum (Potato)).